The sequence spans 3401 residues: Genome polyprotein (3401 aa).

The Cytoplasmic segment spans residues 1 to 104 (MPVRPRNKPK…GRKKRRSMTH (104 aa)). Positions 101–117 (SMTHGIILSLGVTMVIG) are cleaved as a propeptide — ER anchor for the capsid protein C, removed in mature form by serine protease NS3. Residues 105 to 125 (GIILSLGVTMVIGASLHHHGG) form a helical membrane-spanning segment. Over 126 to 240 (RYLLNVTHAD…GERQIQRIER (115 aa)) the chain is Extracellular. Asn-130 and Asn-146 each carry an N-linked (GlcNAc...) asparagine; by host glycan. Residues 241–261 (WMMRNPFYAAISLLLAWWVGS) traverse the membrane as a helical segment. Topologically, residues 262 to 266 (DIKQK) are cytoplasmic. The helical transmembrane segment at 267-281 (VLIAFLVLAIGPAYS) threads the bilayer. The Extracellular portion of the chain corresponds to 282–725 (THCVGIPKRD…HTVFGNVFHS (444 aa)). Disulfide bonds link Cys-284–Cys-311, Cys-355–Cys-386, Cys-373–Cys-397, Cys-462–Cys-564, and Cys-581–Cys-611. Residues 379 to 392 (DRGWGNGCGLFGKG) are fusion peptide. The chain crosses the membrane as a helical span at residues 726-746 (IFGGLSWITKIILGGMFLWLG). The Extracellular segment spans residues 747–753 (VNSRNQT). The helical transmembrane segment at 754-774 (MCMVLMAVGGILLFMTLGVSG) threads the bilayer. Residues 775–1122 (EVGCSLDIKR…NVHEEHLVRS (348 aa)) lie on the Extracellular side of the membrane. Disulfide bonds link Cys-778–Cys-789, Cys-829–Cys-916, Cys-952–Cys-997, Cys-1054–Cys-1103, Cys-1065–Cys-1087, and Cys-1086–Cys-1090. Residues Asn-904 and Asn-981 are each glycosylated (N-linked (GlcNAc...) asparagine; by host). Residues 1123 to 1143 (WASAGTGMAESSLGLVALFLF) form a helical membrane-spanning segment. Residues 1144-1198 (TDIFARKRMTRKFMVIGCLGVLSVMIVGGFTALDLIRYIIVVGQHFASMNHGGDV) are Cytoplasmic-facing. A helical membrane pass occupies residues 1199-1219 (AYLAIIAVGKLRPGLLMMYSF). The Lumenal portion of the chain corresponds to 1220–1287 (KAAWSPKERV…PILALLTPLS (68 aa)). The helical transmembrane segment at 1288-1308 (MEIIRKTGIFACVGLLGLSLW) threads the bilayer. Over 1309 to 1352 (RGGDTTMRKGMPLLAGAATAASGLTRASLSVVFILCATAASRRS) the chain is Cytoplasmic. Residues 1353–1373 (WPIGEIMAIVGIVGTGFGMAV) form a helical membrane-spanning segment. Topologically, residues 1374–1376 (NDQ) are lumenal. The chain crosses the membrane as a helical span at residues 1377–1397 (ASLAGPMLVFGLIMIVYATLG). Residues 1398–1447 (RADGLTLKRVGDITWEEEAVHSGSSTRYDVTLNEAGEFKLVHEEPVVWSH) are Cytoplasmic-facing. Residues 1404–1443 (LKRVGDITWEEEAVHSGSSTRYDVTLNEAGEFKLVHEEPV) form an interacts with and activates NS3 protease region. Residues 1448 to 1468 (VVFLVVALIAASVHPIALVVV) constitute an intramembrane region (helical). Residues 1469-2154 (TIIWTYGKKH…ASTNAPEAVT (686 aa)) are Cytoplasmic-facing. The Peptidase S7 domain occupies 1481-1661 (GGVLWDIPIA…GGEGVTEEPL (181 aa)). Catalysis depends on charge relay system; for serine protease NS3 activity residues His-1532, Asp-1556, and Ser-1617. Residues 1665–1821 (ATMLRKGKLT…ESNGEIEDLR (157 aa)) form the Helicase ATP-binding domain. Residues 1669–1672 (RKGK) are important for RNA-binding. Residue 1678-1685 (YHPGAGKT) participates in ATP binding. The DEAH box signature appears at 1769-1772 (DEAH). The Helicase C-terminal domain maps to 1816–1995 (EIEDLRRDIP…GMVAPLYDVE (180 aa)). The chain crosses the membrane as a helical span at residues 2155–2175 (ILLMTGIVVACTLGVGLAFMW). At 2176–2181 (PKGVDK) the chain is on the lumenal side. An intramembrane region (helical) is located at residues 2182–2200 (MSMGMITMSIAGYLMLQGG). A topological domain (lumenal) is located at residue Leu-2201. The chain crosses the membrane as a helical span at residues 2202–2222 (TPVQVASVLLIFFIFMVVLIP). Residues 2223–2235 (EAGTQRSINDNKT) are Cytoplasmic-facing. A helical membrane pass occupies residues 2236–2250 (LYVLLGVALLIGAIT). Over 2251–2285 (ANEMGYLEKTKRDLLGERVQNEWKLELPMFDLRPG) the chain is Cytoplasmic. Positions 2286–2306 (AAWSIYVGLATLVMPVLDHWI) form an intramembrane region, helical. Over 2307–2354 (RTEYGSLSLTGIAQQASILQAMDKGVPFFKLNMSVIVLLVSVWNNFSM) the chain is Lumenal. Residues 2355 to 2375 (LSVLCGVGLLGVHCAFVLPGL) traverse the membrane as a helical segment. The Cytoplasmic portion of the chain corresponds to 2376–2418 (RAQAAKQAQRRVYHGVAKNPVVDGQTTAEIETAPEMPPLYEKK). Residues 2419 to 2439 (LALVLLGVVAIANGVMVRSAF) traverse the membrane as a helical segment. The Lumenal portion of the chain corresponds to 2440–2467 (SMAETVVLLSAAVGPLLEGNTSAIWNGP). A helical membrane pass occupies residues 2468–2488 (MAVAMAGIMRGNYYAGIGLAY). At 2489–3401 (NLWILQSPKR…YSVQEVGTVL (913 aa)) the chain is on the cytoplasmic side. The region spanning 2499–2763 (GRSTTMTLGE…DVVFPTGTRN (265 aa)) is the mRNA cap 0-1 NS5-type MT domain. Ser-2554 serves as a coordination point for S-adenosyl-L-methionine. Ser-2554 bears the Phosphoserine mark. Catalysis depends on Lys-2559, which acts as the For 2'-O-MTase activity. Residues Gly-2584, Trp-2585, Thr-2602, Leu-2603, Asp-2629, and Val-2630 each coordinate S-adenosyl-L-methionine. Asp-2644 (for 2'-O-MTase activity) is an active-site residue. S-adenosyl-L-methionine is bound at residue Ile-2645. Catalysis depends on for 2'-O-MTase activity residues Lys-2680 and Glu-2716. Tyr-2718 is an S-adenosyl-L-methionine binding site. Residues 2869–2902 (RAIMEVVNKWMFDFLAREKAPRICTKEEFINKVR) carry the Nuclear localization signal motif. Residues Glu-2936, His-2940, Cys-2945, and Cys-2948 each contribute to the Zn(2+) site. The region spanning 3026 to 3178 (GIMYADDTAG…APLDERFGLA (153 aa)) is the RdRp catalytic domain. 3 residues coordinate Zn(2+): His-3213, Cys-3229, and Cys-3348.

In the N-terminal section; belongs to the class I-like SAM-binding methyltransferase superfamily. mRNA cap 0-1 NS5-type methyltransferase family. Homodimer. Interacts (via N-terminus) with host EXOC1 (via C-terminus); this interaction results in EXOC1 degradation through the proteasome degradation pathway. As to quaternary structure, forms heterodimers with envelope protein E in the endoplasmic reticulum and Golgi. In terms of assembly, homodimer; in the endoplasmic reticulum and Golgi. Interacts with protein prM. Interacts with non-structural protein 1. Homodimer; Homohexamer when secreted. Interacts with envelope protein E. NS1 interacts with NS4B. Interacts with host complement protein CFH; this interaction leads to the degradation of C3. As to quaternary structure, interacts (via N-terminus) with serine protease NS3. In terms of assembly, forms a heterodimer with serine protease NS3. May form homooligomers. Forms a heterodimer with NS2B. Interacts with non-structural protein 2A (via N-terminus). Interacts with NS4B. Interacts with unphosphorylated RNA-directed RNA polymerase NS5; this interaction stimulates RNA-directed RNA polymerase NS5 guanylyltransferase activity. NS3 interacts with host PDCD6IP; this interaction contributes to virion release. As to quaternary structure, interacts with serine protease NS3. In terms of assembly, homodimer. Interacts with host STAT2; this interaction prevents the establishment of cellular antiviral state. Interacts with serine protease NS3. Interacts with host TRIM23; this interaction leads to NS5 ubiquitination. In terms of processing, specific enzymatic cleavages in vivo yield mature proteins. The nascent capsid protein C contains a C-terminal hydrophobic domain that act as a signal sequence for translocation of prM into the lumen of the ER. Mature capsid protein C is cleaved at a site upstream of this hydrophobic domain by NS3. prM is cleaved in post-Golgi vesicles by a host furin, releasing the mature small envelope protein M, and peptide pr. Non-structural protein 2A-alpha, a C-terminally truncated form of non-structural protein 2A, results from partial cleavage by NS3. Specific enzymatic cleavages in vivo yield mature proteins peptide 2K acts as a signal sequence and is removed from the N-terminus of NS4B by the host signal peptidase in the ER lumen. Signal cleavage at the 2K-4B site requires a prior NS3 protease-mediated cleavage at the 4A-2K site. Post-translationally, cleaved in post-Golgi vesicles by a host furin, releasing the mature small envelope protein M, and peptide pr. This cleavage is incomplete as up to 30% of viral particles still carry uncleaved prM. N-glycosylated. In terms of processing, N-glycosylated. The excreted form is glycosylated and this is required for efficient secretion of the protein from infected cells. Post-translationally, polyubiquitinated; ubiquitination is probably mediated by host TRIM23 and is prerequisite for NS5-STAT2 interaction. NS5 is not ISGylated or sumoylated. Phosphorylated on serines residues. This phosphorylation may trigger NS5 nuclear localization.

It localises to the virion. The protein resides in the host nucleus. The protein localises to the host cytoplasm. It is found in the host perinuclear region. Its subcellular location is the virion membrane. It localises to the host endoplasmic reticulum membrane. The protein resides in the secreted. It carries out the reaction Selective hydrolysis of -Xaa-Xaa-|-Yaa- bonds in which each of the Xaa can be either Arg or Lys and Yaa can be either Ser or Ala.. The catalysed reaction is RNA(n) + a ribonucleoside 5'-triphosphate = RNA(n+1) + diphosphate. The enzyme catalyses a ribonucleoside 5'-triphosphate + H2O = a ribonucleoside 5'-diphosphate + phosphate + H(+). It catalyses the reaction ATP + H2O = ADP + phosphate + H(+). It carries out the reaction a 5'-end (5'-triphosphoguanosine)-ribonucleoside in mRNA + S-adenosyl-L-methionine = a 5'-end (N(7)-methyl 5'-triphosphoguanosine)-ribonucleoside in mRNA + S-adenosyl-L-homocysteine. The catalysed reaction is a 5'-end (N(7)-methyl 5'-triphosphoguanosine)-ribonucleoside in mRNA + S-adenosyl-L-methionine = a 5'-end (N(7)-methyl 5'-triphosphoguanosine)-(2'-O-methyl-ribonucleoside) in mRNA + S-adenosyl-L-homocysteine + H(+). Its function is as follows. Plays a role in virus budding by binding to the cell membrane and gathering the viral RNA into a nucleocapsid that forms the core of a mature virus particle. During virus entry, may induce genome penetration into the host cytoplasm after hemifusion induced by the surface proteins. Can migrate to the cell nucleus where it modulates host functions. Functionally, inhibits RNA silencing by interfering with host Dicer. In terms of biological role, prevents premature fusion activity of envelope proteins in trans-Golgi by binding to envelope protein E at pH6.0. After virion release in extracellular space, gets dissociated from E dimers. Acts as a chaperone for envelope protein E during intracellular virion assembly by masking and inactivating envelope protein E fusion peptide. prM is the only viral peptide matured by host furin in the trans-Golgi network probably to avoid catastrophic activation of the viral fusion activity in acidic Golgi compartment prior to virion release. prM-E cleavage is inefficient, and many virions are only partially matured. These uncleaved prM would play a role in immune evasion. Its function is as follows. May play a role in virus budding. Exerts cytotoxic effects by activating a mitochondrial apoptotic pathway through M ectodomain. May display a viroporin activity. Functionally, binds to host cell surface receptor and mediates fusion between viral and cellular membranes. Envelope protein is synthesized in the endoplasmic reticulum in the form of heterodimer with protein prM. They play a role in virion budding in the ER, and the newly formed immature particle is covered with 60 spikes composed of heterodimer between precursor prM and envelope protein E. The virion is transported to the Golgi apparatus where the low pH causes dissociation of PrM-E heterodimers and formation of E homodimers. prM-E cleavage is inefficient, and many virions are only partially matured. These uncleaved prM would play a role in immune evasion. In terms of biological role, involved in immune evasion, pathogenesis and viral replication. Once cleaved off the polyprotein, is targeted to three destinations: the viral replication cycle, the plasma membrane and the extracellular compartment. Essential for viral replication. Required for formation of the replication complex and recruitment of other non-structural proteins to the ER-derived membrane structures. Excreted as a hexameric lipoparticle that plays a role against host immune response. Antagonizing the complement function. Binds to the host macrophages and dendritic cells. Inhibits signal transduction originating from Toll-like receptor 3 (TLR3). Component of the viral RNA replication complex that functions in virion assembly and antagonizes the host immune response. Its function is as follows. Required cofactor for the serine protease function of NS3. May have membrane-destabilizing activity and form viroporins. Functionally, displays three enzymatic activities: serine protease, NTPase and RNA helicase. NS3 serine protease, in association with NS2B, performs its autocleavage and cleaves the polyprotein at dibasic sites in the cytoplasm: C-prM, NS2A-NS2B, NS2B-NS3, NS3-NS4A, NS4A-2K and NS4B-NS5. NS3 RNA helicase binds RNA and unwinds dsRNA in the 3' to 5' direction. Also plays a role in virus assembly. In terms of biological role, regulates the ATPase activity of the NS3 helicase activity. NS4A allows NS3 helicase to conserve energy during unwinding. Functions as a signal peptide for NS4B and is required for the interferon antagonism activity of the latter. Its function is as follows. Induces the formation of ER-derived membrane vesicles where the viral replication takes place. Inhibits interferon (IFN)-induced host STAT1 phosphorylation and nuclear translocation, thereby preventing the establishment of cellular antiviral state by blocking the IFN-alpha/beta pathway. Functionally, replicates the viral (+) and (-) RNA genome, and performs the capping of genomes in the cytoplasm. NS5 methylates viral RNA cap at guanine N-7 and ribose 2'-O positions. Besides its role in RNA genome replication, also prevents the establishment of cellular antiviral state by blocking the interferon-alpha/beta (IFN-alpha/beta) signaling pathway. IFN-I induces binding of NS5 to host IFN-activated transcription factor STAT2, preventing its transcriptional activity. Host TRIM23 is the E3 ligase that interacts with and polyubiquitinates NS5 to promote its binding to STAT2 and trigger IFN-I signaling inhibition. The polypeptide is Genome polyprotein (Edge Hill virus (EHV)).